Reading from the N-terminus, the 314-residue chain is tRNA dimethylallyltransferase (314 aa).

ATP is bound at residue 11 to 18; that stretch reads GPTASGKT. A substrate-binding site is contributed by 13 to 18; the sequence is TASGKT. Interaction with substrate tRNA stretches follow at residues 36-39, 160-164, 241-246, and 274-281; these read DSAL, QRINR, RCVGYR, and KRQITWLR.

Belongs to the IPP transferase family. Monomer. The cofactor is Mg(2+).

It catalyses the reaction adenosine(37) in tRNA + dimethylallyl diphosphate = N(6)-dimethylallyladenosine(37) in tRNA + diphosphate. In terms of biological role, catalyzes the transfer of a dimethylallyl group onto the adenine at position 37 in tRNAs that read codons beginning with uridine, leading to the formation of N6-(dimethylallyl)adenosine (i(6)A). This is tRNA dimethylallyltransferase from Glaesserella parasuis serovar 5 (strain SH0165) (Haemophilus parasuis).